The primary structure comprises 62 residues: Large ribosomal subunit protein uL29 (62 aa).

It belongs to the universal ribosomal protein uL29 family.

The sequence is that of Large ribosomal subunit protein uL29 from Geobacter metallireducens (strain ATCC 53774 / DSM 7210 / GS-15).